A 262-amino-acid polypeptide reads, in one-letter code: tRNA pseudouridine synthase A (262 aa).

The active-site Nucleophile is the aspartate 51. Tyrosine 109 contributes to the substrate binding site.

It belongs to the tRNA pseudouridine synthase TruA family. In terms of assembly, homodimer.

It carries out the reaction uridine(38/39/40) in tRNA = pseudouridine(38/39/40) in tRNA. Formation of pseudouridine at positions 38, 39 and 40 in the anticodon stem and loop of transfer RNAs. The sequence is that of tRNA pseudouridine synthase A from Legionella pneumophila (strain Lens).